A 181-amino-acid polypeptide reads, in one-letter code: Adenine phosphoribosyltransferase (181 aa).

Belongs to the purine/pyrimidine phosphoribosyltransferase family. Homodimer.

The protein localises to the cytoplasm. The enzyme catalyses AMP + diphosphate = 5-phospho-alpha-D-ribose 1-diphosphate + adenine. Its pathway is purine metabolism; AMP biosynthesis via salvage pathway; AMP from adenine: step 1/1. Functionally, catalyzes a salvage reaction resulting in the formation of AMP, that is energically less costly than de novo synthesis. The polypeptide is Adenine phosphoribosyltransferase (Vibrio atlanticus (strain LGP32) (Vibrio splendidus (strain Mel32))).